A 79-amino-acid polypeptide reads, in one-letter code: Putative antitoxin VapB12 (79 aa).

This sequence belongs to the UPF0330 family.

Functionally, possibly the antitoxin component of a type II toxin-antitoxin (TA) system. Its cognate toxin is VapC12 (Potential). In Sulfurisphaera tokodaii (strain DSM 16993 / JCM 10545 / NBRC 100140 / 7) (Sulfolobus tokodaii), this protein is Putative antitoxin VapB12 (vapB12).